Here is a 280-residue protein sequence, read N- to C-terminus: NAD-capped RNA hydrolase NudC (280 aa).

R83 provides a ligand contact to substrate. Zn(2+) is bound by residues C113, C116, C131, and C134. Y139 contributes to the substrate binding site. Positions 140-268 constitute a Nudix hydrolase domain; the sequence is PRVAPAIIVL…ASRRLLDDAL (129 aa). Residues A177, E193, and E197 each coordinate a divalent metal cation. The Nudix box motif lies at 178–199; that stretch reads GFVEPSETLEAAVHREVGEEVG. Position 211–218 (211–218) interacts with substrate; that stretch reads QPWPFPHS. E238 contributes to the a divalent metal cation binding site.

This sequence belongs to the Nudix hydrolase family. NudC subfamily. Homodimer. Mg(2+) is required as a cofactor. The cofactor is Mn(2+). Zn(2+) serves as cofactor.

The enzyme catalyses a 5'-end NAD(+)-phospho-ribonucleoside in mRNA + H2O = a 5'-end phospho-adenosine-phospho-ribonucleoside in mRNA + beta-nicotinamide D-ribonucleotide + 2 H(+). The catalysed reaction is NAD(+) + H2O = beta-nicotinamide D-ribonucleotide + AMP + 2 H(+). It catalyses the reaction NADH + H2O = reduced beta-nicotinamide D-ribonucleotide + AMP + 2 H(+). Functionally, mRNA decapping enzyme that specifically removes the nicotinamide adenine dinucleotide (NAD) cap from a subset of mRNAs by hydrolyzing the diphosphate linkage to produce nicotinamide mononucleotide (NMN) and 5' monophosphate mRNA. The NAD-cap is present at the 5'-end of some mRNAs and stabilizes RNA against 5'-processing. Has preference for mRNAs with a 5'-end purine. Catalyzes the hydrolysis of a broad range of dinucleotide pyrophosphates. This chain is NAD-capped RNA hydrolase NudC, found in Deinococcus radiodurans (strain ATCC 13939 / DSM 20539 / JCM 16871 / CCUG 27074 / LMG 4051 / NBRC 15346 / NCIMB 9279 / VKM B-1422 / R1).